Reading from the N-terminus, the 471-residue chain is Argininosuccinate lyase (471 aa).

Belongs to the lyase 1 family. Argininosuccinate lyase subfamily.

It localises to the cytoplasm. The enzyme catalyses 2-(N(omega)-L-arginino)succinate = fumarate + L-arginine. It functions in the pathway amino-acid biosynthesis; L-arginine biosynthesis; L-arginine from L-ornithine and carbamoyl phosphate: step 3/3. The chain is Argininosuccinate lyase from Ralstonia pickettii (strain 12J).